The primary structure comprises 703 residues: Solute carrier family 28 member 3 (703 aa).

Residues 1–19 (MSRADPGKNSEPSESKMSL) show a composition bias toward basic and acidic residues. The interval 1-93 (MSRADPGKNS…DPEDDSEDEH (93 aa)) is disordered. Over 1-117 (MSRADPGKNS…FCRKHRVVLR (117 aa)) the chain is Cytoplasmic. The segment covering 44-61 (QNTPGNSTVRNRVVQSGE) has biased composition (polar residues). Over residues 63–72 (GHAKQDDRQI) the composition is skewed to basic and acidic residues. A helical transmembrane segment spans residues 118–138 (STIWAVLLTGFLALVIAACAI). The Extracellular segment spans residues 139–143 (NFHRA). Residues 144-164 (LPLFVITLVTIFFVIWDHLMA) form a helical membrane-spanning segment. Over 165 to 188 (KYEQRIDDFLSPGRRLLDRHWFWL) the chain is Cytoplasmic. The helical transmembrane segment at 189 to 209 (KWVVWSSLILAIILWLSLDTA) threads the bilayer. The Extracellular portion of the chain corresponds to 210–212 (KLG). A helical transmembrane segment spans residues 213–234 (QQNLVSFGGLIMYLILLFLFSK). Residues 235 to 242 (HPTRVYWR) lie on the Cytoplasmic side of the membrane. A helical membrane pass occupies residues 243 to 262 (PVFWGIGLQFLLGLLILRTR). Residues 263-299 (PGFVAFDWMGRQVQTFLGYTDTGARFVFGEKYTDHFF) lie on the Extracellular side of the membrane. The chain crosses the membrane as a helical span at residues 300 to 320 (AFKILPIVVFFSTVMSMLYYL). Residues 321–344 (GLMQWIIRKVGWLMLVTMGSSPIE) lie on the Cytoplasmic side of the membrane. Positions 345–363 (SVVAAGNIFIGQTESPLLV) form an intramembrane region, helical. Residues 364-376 (QPYLPHVTKSELH) lie on the Cytoplasmic side of the membrane. The helical transmembrane segment at 377-399 (TIMTAGFATIAGSVLGAYISFGV) threads the bilayer. Topologically, residues 400–401 (SS) are extracellular. Residues 402 to 423 (THLLTASVMSAPAALAVAKLFW) form a helical membrane-spanning segment. At 424–458 (PETEKPKITLKSAMKMENGDSRNLLEAASQGASSS) the chain is on the cytoplasmic side. A helical transmembrane segment spans residues 459–484 (IPLVANIAANLIAFLALLSFVNSALS). Topologically, residues 485 to 522 (WFGSMFNYPELSFELICSYIFMPFSFMMGVDWQDSFMV) are extracellular. The helical intramembrane region spans 523 to 542 (AKLIGYKTFFNEFVAYDHLS). The Extracellular portion of the chain corresponds to 543-581 (KLINLRKAAGPKFVNGVQQYMSIRSETIATYALCGFANF). A helical membrane pass occupies residues 582-592 (GSLGIVIGGLT). Topologically, residues 593 to 605 (SIAPSRKRDIASG) are cytoplasmic. The helical transmembrane segment at 606–628 (AMRALIAGTIACFMTACIAGILS) threads the bilayer. Topologically, residues 629-703 (DTPVDINCHH…LNCNWIPNKL (75 aa)) are extracellular.

This sequence belongs to the concentrative nucleoside transporter (CNT) (TC 2.A.41) family. Homotrimer.

Its subcellular location is the cell membrane. The enzyme catalyses thymidine(out) + 2 Na(+)(out) = thymidine(in) + 2 Na(+)(in). It catalyses the reaction cytidine(out) + 2 Na(+)(out) = cytidine(in) + 2 Na(+)(in). The catalysed reaction is uridine(out) + 2 Na(+)(out) = uridine(in) + 2 Na(+)(in). It carries out the reaction adenosine(out) + 2 Na(+)(out) = adenosine(in) + 2 Na(+)(in). The enzyme catalyses guanosine(out) + 2 Na(+)(out) = guanosine(in) + 2 Na(+)(in). It catalyses the reaction inosine(out) + 2 Na(+)(out) = inosine(in) + 2 Na(+)(in). Its function is as follows. Sodium-dependent, pyrimidine- and purine-selective. Involved in the homeostasis of endogenous nucleosides. Exhibits the transport characteristics of the nucleoside transport system cib or N3 subtype (N3/cib) (with marked transport of both thymidine and inosine). Employs a 2:1 sodium/nucleoside ratio. Also able to transport gemcitabine, 3'-azido-3'-deoxythymidine (AZT), ribavirin and 3-deazauridine. This Mus musculus (Mouse) protein is Solute carrier family 28 member 3 (Slc28a3).